Reading from the N-terminus, the 152-residue chain is Ribosome maturation factor RimP (152 aa).

This sequence belongs to the RimP family.

The protein resides in the cytoplasm. Required for maturation of 30S ribosomal subunits. The chain is Ribosome maturation factor RimP from Serratia proteamaculans (strain 568).